The following is a 157-amino-acid chain: Large ribosomal subunit protein eL24 (157 aa).

Residues 94-157 (RNQKPEVRKA…ISAPRVGGKR (64 aa)) form a disordered region. Over residues 96–117 (QKPEVRKAQREQAIRAAKESKK) the composition is skewed to basic and acidic residues. A compositionally biased stretch (low complexity) spans 123–140 (KKPAAASAKTSAKTAQKP).

This sequence belongs to the eukaryotic ribosomal protein eL24 family. As to quaternary structure, component of the large ribosomal subunit.

Its subcellular location is the cytoplasm. Functionally, component of the large ribosomal subunit. The ribosome is a large ribonucleoprotein complex responsible for the synthesis of proteins in the cell. The sequence is that of Large ribosomal subunit protein eL24 (rpl24) from Gillichthys mirabilis (Long-jawed mudsucker).